A 386-amino-acid chain; its full sequence is Formate-dependent phosphoribosylglycinamide formyltransferase (386 aa).

N(1)-(5-phospho-beta-D-ribosyl)glycinamide contacts are provided by residues 15-16 and glutamate 75; that span reads EL. ATP is bound by residues arginine 107, lysine 148, 153-158, 188-191, and glutamate 196; these read SSGKGQ and EQFI. The 190-residue stretch at 112-301 folds into the ATP-grasp domain; the sequence is ALAAQQLNLQ…EFELHLRAIV (190 aa). The Mg(2+) site is built by glutamate 260 and glutamate 272. N(1)-(5-phospho-beta-D-ribosyl)glycinamide contacts are provided by residues aspartate 279, lysine 349, and 356 to 357; that span reads RR.

The protein belongs to the PurK/PurT family. In terms of assembly, homodimer.

It catalyses the reaction N(1)-(5-phospho-beta-D-ribosyl)glycinamide + formate + ATP = N(2)-formyl-N(1)-(5-phospho-beta-D-ribosyl)glycinamide + ADP + phosphate + H(+). It participates in purine metabolism; IMP biosynthesis via de novo pathway; N(2)-formyl-N(1)-(5-phospho-D-ribosyl)glycinamide from N(1)-(5-phospho-D-ribosyl)glycinamide (formate route): step 1/1. Its function is as follows. Involved in the de novo purine biosynthesis. Catalyzes the transfer of formate to 5-phospho-ribosyl-glycinamide (GAR), producing 5-phospho-ribosyl-N-formylglycinamide (FGAR). Formate is provided by PurU via hydrolysis of 10-formyl-tetrahydrofolate. The chain is Formate-dependent phosphoribosylglycinamide formyltransferase from Francisella tularensis subsp. novicida (strain U112).